A 492-amino-acid polypeptide reads, in one-letter code: Protein nucleotidyltransferase YdiU (492 aa).

The ATP site is built by Gly88, Gly90, Arg91, Lys111, Asp123, Gly124, Arg174, and Arg181. Catalysis depends on Asp250, which acts as the Proton acceptor. Residues Asn251 and Asp260 each contribute to the Mg(2+) site. Residue Asp260 participates in ATP binding.

The protein belongs to the SELO family. The cofactor is Mg(2+). Mn(2+) is required as a cofactor.

The enzyme catalyses L-seryl-[protein] + ATP = 3-O-(5'-adenylyl)-L-seryl-[protein] + diphosphate. It catalyses the reaction L-threonyl-[protein] + ATP = 3-O-(5'-adenylyl)-L-threonyl-[protein] + diphosphate. The catalysed reaction is L-tyrosyl-[protein] + ATP = O-(5'-adenylyl)-L-tyrosyl-[protein] + diphosphate. It carries out the reaction L-histidyl-[protein] + UTP = N(tele)-(5'-uridylyl)-L-histidyl-[protein] + diphosphate. The enzyme catalyses L-seryl-[protein] + UTP = O-(5'-uridylyl)-L-seryl-[protein] + diphosphate. It catalyses the reaction L-tyrosyl-[protein] + UTP = O-(5'-uridylyl)-L-tyrosyl-[protein] + diphosphate. Nucleotidyltransferase involved in the post-translational modification of proteins. It can catalyze the addition of adenosine monophosphate (AMP) or uridine monophosphate (UMP) to a protein, resulting in modifications known as AMPylation and UMPylation. The chain is Protein nucleotidyltransferase YdiU from Rhodopseudomonas palustris (strain HaA2).